The chain runs to 842 residues: Axin-1 (842 aa).

The segment at 1-75 (MSVKGKGFPL…LDLGYEPEGS (75 aa)) is disordered. Residues 34–46 (TTDQRPFSHTYYS) are compositionally biased toward polar residues. The region spanning 88-211 (SLHSLLDDQD…LKSDIYLEYT (124 aa)) is the RGS domain. Disordered stretches follow at residues 218–242 (PKNYSDQSSGSGTGKGPSGYLPTLN), 277–297 (SHCAGSNRRLSDGREFRPGTW), 316–344 (TSANDSEQQSMSSDADTMSLTDSSVDGIP), 414–451 (KRVRAEEEGDDGDVSSGPSVISHKLPSGPPMHHFNSRY), 482–532 (KTPG…AKVD), 543–562 (YHHVHHHGGVKPKEQIDGES), 615–637 (KKADLGKSESASHEMPVVPEDSE), 656–675 (HKKSNHSSSSAKKQPPTELA), and 729–754 (RLEEEEKKAAKMPQKQRLKPQKKNVS). Residues 316–339 (TSANDSEQQSMSSDADTMSLTDSS) are compositionally biased toward polar residues. The segment at 348–433 (LRKHYRREMQ…DGDVSSGPSV (86 aa)) is interaction with GSK3B. The interval 434–508 (ISHKLPSGPP…RSPDGHLSKT (75 aa)) is interaction with beta-catenin. The segment covering 543–552 (YHHVHHHGGV) has biased composition (basic residues). The segment covering 615 to 626 (KKADLGKSESAS) has biased composition (basic and acidic residues). Residues 760-842 (CDNIVVAYYF…KIIGQVEKID (83 aa)) enclose the DIX domain.

In terms of assembly, homodimer. Interacts with hwa; leading to promote the tankyrase-mediated degradation of axin1. In terms of processing, ADP-ribosylated by tankyrase tnks and tnks2. Poly-ADP-ribosylated protein is recognized by rnf146, followed by ubiquitination at 'Lys-48' and subsequent activation of the Wnt signaling pathway. Post-translationally, ubiquitinated by rnf146 when poly-ADP-ribosylated, leading to its degradation and subsequent activation of the Wnt signaling pathway.

The protein localises to the cytoplasm. The protein resides in the nucleus. It localises to the membrane. It is found in the cell membrane. Functionally, component of the beta-catenin destruction complex required for regulating ctnnb1 levels through phosphorylation and ubiquitination, and modulating Wnt-signaling. Controls dorsoventral patterning via two opposing effects; down-regulates ctnnb1 to inhibit the Wnt signaling pathway and ventralize embryos, but also dorsalizes embryos by activating a Wnt-independent JNK signaling pathway. The chain is Axin-1 (axin1) from Xenopus laevis (African clawed frog).